The primary structure comprises 461 residues: Smoothelin-like protein 2 (461 aa).

Residues P55–S88 adopt a coiled-coil conformation. Disordered regions lie at residues A87–P193 and L227–S248. Over residues P94 to G107 the composition is skewed to pro residues. T96 carries the phosphothreonine modification. Phosphoserine occurs at positions 101, 129, and 134. Over residues S134–K147 the composition is skewed to basic and acidic residues. S256 and S269 each carry phosphoserine. The tract at residues A260–P307 is disordered. Positions L272–P285 are enriched in pro residues. T274 bears the Phosphothreonine mark. Residue S278 is modified to Phosphoserine. Residues R292 to V301 are compositionally biased toward basic and acidic residues. S344 bears the Phosphoserine mark. The 108-residue stretch at S351–R458 folds into the Calponin-homology (CH) domain.

The protein belongs to the smoothelin family.

This is Smoothelin-like protein 2 (SMTNL2) from Homo sapiens (Human).